We begin with the raw amino-acid sequence, 202 residues long: ATP-dependent Clp protease proteolytic subunit (202 aa).

Ser-106 functions as the Nucleophile in the catalytic mechanism. Residue His-131 is part of the active site.

It belongs to the peptidase S14 family. Fourteen ClpP subunits assemble into 2 heptameric rings which stack back to back to give a disk-like structure with a central cavity, resembling the structure of eukaryotic proteasomes.

It is found in the cytoplasm. It catalyses the reaction Hydrolysis of proteins to small peptides in the presence of ATP and magnesium. alpha-casein is the usual test substrate. In the absence of ATP, only oligopeptides shorter than five residues are hydrolyzed (such as succinyl-Leu-Tyr-|-NHMec, and Leu-Tyr-Leu-|-Tyr-Trp, in which cleavage of the -Tyr-|-Leu- and -Tyr-|-Trp bonds also occurs).. Cleaves peptides in various proteins in a process that requires ATP hydrolysis. Has a chymotrypsin-like activity. Plays a major role in the degradation of misfolded proteins. In Paracidovorax citrulli (strain AAC00-1) (Acidovorax citrulli), this protein is ATP-dependent Clp protease proteolytic subunit.